The following is a 578-amino-acid chain: Septation ring formation regulator EzrA (578 aa).

The Extracellular segment spans residues 1–8 (MKNNWIII). Residues 9-27 (LVLVIVIIAAVLYLIGYFM) traverse the membrane as a helical segment. At 28-578 (RKKNQEQLDE…NINNPNLTAI (551 aa)) the chain is on the cytoplasmic side. Coiled-coil stretches lie at residues 103–165 (RFMK…DDKA), 256–285 (QNFAEEIQHAKKRVENSMADLEKTEIAAVE), and 394–490 (KILD…DDLE).

It belongs to the EzrA family.

The protein resides in the cell membrane. Functionally, negative regulator of FtsZ ring formation; modulates the frequency and position of FtsZ ring formation. Inhibits FtsZ ring formation at polar sites. Interacts either with FtsZ or with one of its binding partners to promote depolymerization. The protein is Septation ring formation regulator EzrA of Enterococcus faecalis (strain ATCC 700802 / V583).